A 509-amino-acid chain; its full sequence is DNA primase large subunit (509 aa).

Positions 253-270 (LSHSYTGQDYSTQGNVGK) are interdomain linker. Residues 266-509 (GNVGKISLDQ…GLEDYFSEDS (244 aa)) form an interacts with PRIM1 region. Positions 287, 367, 384, and 424 each coordinate [4Fe-4S] cluster. The tract at residues 300-442 (HLRHGGRMQY…NVDDCGFSLN (143 aa)) is RNA:DNA duplex-binding. The tract at residues 461-486 (IKKEPIQPETPQPKPSVQKTKDASSA) is disordered. Thr-470 bears the Phosphothreonine mark.

The protein belongs to the eukaryotic-type primase large subunit family. Heterodimer of a catalytic subunit PRIM1 and a regulatory subunit PRIM2, also known as the DNA primase complex. Interacts via (C-terminus) with PRIM1. Component of the alpha DNA polymerase complex (also known as the alpha DNA polymerase-primase complex) consisting of four subunits: the catalytic subunit POLA1, the regulatory subunit POLA2, and the primase complex subunits PRIM1 and PRIM2 respectively. Within the complex, POLA1 directly interacts with PRIM2. The cofactor is [4Fe-4S] cluster.

In terms of biological role, regulatory subunit of the DNA primase complex and component of the DNA polymerase alpha complex (also known as the alpha DNA polymerase-primase complex) which play an essential role in the initiation of DNA synthesis. During the S phase of the cell cycle, the DNA polymerase alpha complex (composed of a catalytic subunit POLA1, an accessory subunit POLA2 and two primase subunits, the catalytic subunit PRIM1 and the regulatory subunit PRIM2) is recruited to DNA at the replicative forks via direct interactions with MCM10 and WDHD1. The primase subunit of the polymerase alpha complex initiates DNA synthesis by oligomerising short RNA primers on both leading and lagging strands. These primers are initially extended by the polymerase alpha catalytic subunit and subsequently transferred to polymerase delta and polymerase epsilon for processive synthesis on the lagging and leading strand, respectively. In the primase complex, both subunits are necessary for the initial di-nucleotide formation, but the extension of the primer depends only on the catalytic subunit. Binds RNA:DNA duplex and coordinates the catalytic activities of PRIM1 and POLA2 during primase-to-polymerase switch. This Homo sapiens (Human) protein is DNA primase large subunit (PRIM2).